The sequence spans 332 residues: Leucine carboxyl methyltransferase 1 (332 aa).

The segment at 1–23 (MAASLRRPSFTTCSSPTDTDDEG) is disordered. Residues R71, G96, D120, 169 to 170 (DL), and E196 each bind S-adenosyl-L-methionine.

Belongs to the methyltransferase superfamily. LCMT family.

It carries out the reaction [phosphatase 2A protein]-C-terminal L-leucine + S-adenosyl-L-methionine = [phosphatase 2A protein]-C-terminal L-leucine methyl ester + S-adenosyl-L-homocysteine. Methylates the carboxyl group of the C-terminal leucine residue of protein phosphatase 2A catalytic subunits to form alpha-leucine ester residues. The chain is Leucine carboxyl methyltransferase 1 (LCMT1) from Bos taurus (Bovine).